The following is a 244-amino-acid chain: Large ribosomal subunit protein uL30B (244 aa).

The segment covering 1 to 11 (MSTEKILTPES) has biased composition (polar residues). The interval 1–21 (MSTEKILTPESQLKKTKAQQK) is disordered.

This sequence belongs to the universal ribosomal protein uL30 family. As to quaternary structure, component of the large ribosomal subunit (LSU). Mature yeast ribosomes consist of a small (40S) and a large (60S) subunit. The 40S small subunit contains 1 molecule of ribosomal RNA (18S rRNA) and 33 different proteins (encoded by 57 genes). The large 60S subunit contains 3 rRNA molecules (25S, 5.8S and 5S rRNA) and 46 different proteins (encoded by 81 genes).

Its subcellular location is the cytoplasm. Functionally, component of the ribosome, a large ribonucleoprotein complex responsible for the synthesis of proteins in the cell. The small ribosomal subunit (SSU) binds messenger RNAs (mRNAs) and translates the encoded message by selecting cognate aminoacyl-transfer RNA (tRNA) molecules. The large subunit (LSU) contains the ribosomal catalytic site termed the peptidyl transferase center (PTC), which catalyzes the formation of peptide bonds, thereby polymerizing the amino acids delivered by tRNAs into a polypeptide chain. The nascent polypeptides leave the ribosome through a tunnel in the LSU and interact with protein factors that function in enzymatic processing, targeting, and the membrane insertion of nascent chains at the exit of the ribosomal tunnel. The protein is Large ribosomal subunit protein uL30B of Saccharomyces cerevisiae (strain ATCC 204508 / S288c) (Baker's yeast).